A 332-amino-acid polypeptide reads, in one-letter code: Probable xyloglucan endotransglucosylase/hydrolase protein 28 (332 aa).

An N-terminal signal peptide occupies residues 1–22 (MGFITRFLVFMSLFTSLVSGFA). The 201-residue stretch at 23-223 (LQKLPLIQFD…YKYAPYVSQF (201 aa)) folds into the GH16 domain. Residue Glu108 is the Nucleophile of the active site. Glu112 serves as the catalytic Proton donor. Residues Glu112 and 125 to 127 (QTN) contribute to the xyloglucan site. The N-linked (GlcNAc...) asparagine glycan is linked to Asn131. Xyloglucan is bound by residues 135–139 (HLGRE), 202–203 (KW), Gly207, and Arg282. Cys277 and Cys290 are joined by a disulfide. Residues 313 to 326 (HGHRRGKHRSRSRL) are compositionally biased toward basic residues. Residues 313-332 (HGHRRGKHRSRSRLARTESI) form a disordered region.

This sequence belongs to the glycosyl hydrolase 16 family. XTH group 3 subfamily. In terms of processing, contains at least one intrachain disulfide bond essential for its enzymatic activity. In terms of tissue distribution, expressed in 7 day old seedlings, roots, rosette leaves, internodes between nodes bearing axillary shoots, nodes bearing flowers, flower buds and siliques.

The protein resides in the secreted. It localises to the cell wall. Its subcellular location is the extracellular space. It is found in the apoplast. It catalyses the reaction breaks a beta-(1-&gt;4) bond in the backbone of a xyloglucan and transfers the xyloglucanyl segment on to O-4 of the non-reducing terminal glucose residue of an acceptor, which can be a xyloglucan or an oligosaccharide of xyloglucan.. In terms of biological role, catalyzes xyloglucan endohydrolysis (XEH) and/or endotransglycosylation (XET). Cleaves and religates xyloglucan polymers, an essential constituent of the primary cell wall, and thereby participates in cell wall construction of growing tissues. The sequence is that of Probable xyloglucan endotransglucosylase/hydrolase protein 28 (XTH28) from Arabidopsis thaliana (Mouse-ear cress).